Here is a 151-residue protein sequence, read N- to C-terminus: Putative superoxide dismutase [Cu-Zn] (151 aa).

The Cu cation site is built by histidine 43, histidine 45, and histidine 60. An intrachain disulfide couples cysteine 54 to cysteine 144. Residues histidine 60, histidine 68, histidine 77, and aspartate 80 each contribute to the Zn(2+) site. Histidine 118 serves as a coordination point for Cu cation.

The protein belongs to the Cu-Zn superoxide dismutase family. It depends on Cu cation as a cofactor. The cofactor is Zn(2+).

The enzyme catalyses 2 superoxide + 2 H(+) = H2O2 + O2. Its function is as follows. Nonessential for normal virus replication. Could be either non-functional or with a low activity. The polypeptide is Putative superoxide dismutase [Cu-Zn] (SOD) (Lepidoptera (butterflies and moths)).